Reading from the N-terminus, the 145-residue chain is Ribosome maturation factor RimP (145 aa).

This sequence belongs to the RimP family.

The protein localises to the cytoplasm. In terms of biological role, required for maturation of 30S ribosomal subunits. The protein is Ribosome maturation factor RimP of Azotobacter vinelandii (strain DJ / ATCC BAA-1303).